The sequence spans 96 residues: Co-chaperonin GroES (96 aa).

Belongs to the GroES chaperonin family. Heptamer of 7 subunits arranged in a ring. Interacts with the chaperonin GroEL.

Its subcellular location is the cytoplasm. Functionally, together with the chaperonin GroEL, plays an essential role in assisting protein folding. The GroEL-GroES system forms a nano-cage that allows encapsulation of the non-native substrate proteins and provides a physical environment optimized to promote and accelerate protein folding. GroES binds to the apical surface of the GroEL ring, thereby capping the opening of the GroEL channel. This is Co-chaperonin GroES from Dechloromonas aromatica (strain RCB).